The sequence spans 100 residues: Large ribosomal subunit protein uL23 (100 aa).

It belongs to the universal ribosomal protein uL23 family. As to quaternary structure, part of the 50S ribosomal subunit. Contacts protein L29, and trigger factor when it is bound to the ribosome.

One of the early assembly proteins it binds 23S rRNA. One of the proteins that surrounds the polypeptide exit tunnel on the outside of the ribosome. Forms the main docking site for trigger factor binding to the ribosome. This chain is Large ribosomal subunit protein uL23, found in Shewanella halifaxensis (strain HAW-EB4).